A 203-amino-acid chain; its full sequence is Sperm-specific protein PHI-2B/PHI-3 (203 aa).

Residues Met-1–Arg-35 show a composition bias toward basic residues. 2 disordered regions span residues Met-1–Leu-46 and Lys-104–Lys-203. Residues Lys-41 to Lys-120 enclose the H15 domain. Composition is skewed to basic residues over residues Lys-126–Lys-140 and Lys-147–Lys-203.

Post-translationally, PL-II* and PL-IV are produced by post-translational cleavage of a common precursor. Sperm.

It is found in the nucleus. The protein localises to the chromosome. Linker histones are implicated in chromatin remodeling and/or transcriptional regulation during spermiogenesis, the process of spermatid maturation into spermatozoa. Protamines substitute for histones in the chromatin of sperm during the haploid phase of spermatogenesis. They compact sperm DNA into a highly condensed, stable and inactive complex. In Mytilus trossulus (Blue mussel), this protein is Sperm-specific protein PHI-2B/PHI-3.